The chain runs to 176 residues: Large ribosomal subunit protein eL20 (176 aa).

Belongs to the eukaryotic ribosomal protein eL20 family. In terms of assembly, component of the large ribosomal subunit.

It localises to the cytoplasm. Functionally, component of the large ribosomal subunit. The ribosome is a large ribonucleoprotein complex responsible for the synthesis of proteins in the cell. This is Large ribosomal subunit protein eL20 (rpl18a) from Salmo salar (Atlantic salmon).